We begin with the raw amino-acid sequence, 359 residues long: Type-1 angiotensin II receptor A (359 aa).

Topologically, residues 1-25 are extracellular; sequence MALNSSTEDGIKRIQDDCPRAGRHS. N-linked (GlcNAc...) asparagine glycosylation occurs at Asn-4. Residues Gln-15 and Asp-17 each contribute to the angiotensin II site. 2 disulfides stabilise this stretch: Cys-18/Cys-274 and Cys-101/Cys-180. A helical membrane pass occupies residues 26 to 55; it reads YIFVMIPTLYSIIFVVGIFGNSLVVIVIYF. Residues 56–61 are Cytoplasmic-facing; the sequence is YMKLKT. The helical transmembrane segment at 62–89 threads the bilayer; it reads VASVFLLNLALADLCFLLTLPLWAVYTA. Over 90–98 the chain is Extracellular; it reads MEYRWPFGN. The chain crosses the membrane as a helical span at residues 99–125; sequence HLCKIASASVSFNLYASVFLLTCLSID. The Cytoplasmic segment spans residues 126 to 141; it reads RYLAIVHPMKSRLRRT. The helical transmembrane segment at 142 to 165 threads the bilayer; the sequence is MLVAKVTCIIIWLMAGLASLPAVI. At 166 to 190 the chain is on the extracellular side; it reads HRNVYFIENTNITVCAFHYESRNST. Residue Arg-167 participates in angiotensin II binding. Asn-176 carries an N-linked (GlcNAc...) asparagine glycan. 3 residues coordinate angiotensin II: Phe-182, His-183, and Tyr-184. A glycan (N-linked (GlcNAc...) asparagine) is linked at Asn-188. Residues 191–216 traverse the membrane as a helical segment; it reads LPIGLGLTKNILGFLFPFLIILTSYT. Lys-199 provides a ligand contact to angiotensin II. Residues 217 to 239 lie on the Cytoplasmic side of the membrane; sequence LIWKALKKAYEIQKNKPRNDDIF. A helical membrane pass occupies residues 240-268; the sequence is RIIMAIVLFFFFSWVPHQIFTFLDVLIQL. The Extracellular segment spans residues 269–278; it reads GVIHDCKIAD. A helical transmembrane segment spans residues 279-304; that stretch reads IVDTAMPITICIAYFNNCLNPLFYGF. Over 305 to 359 the chain is Cytoplasmic; that stretch reads LGKKFKKYFLQLLKYIPPKAKSHSSLSTKMSTLSYRPSDNMSSAAKKPASCSEVE. A compositionally biased stretch (polar residues) spans 335-347; sequence STLSYRPSDNMSS. Residues 335 to 359 are disordered; sequence STLSYRPSDNMSSAAKKPASCSEVE. Cys-355 is lipidated: S-palmitoyl cysteine.

Belongs to the G-protein coupled receptor 1 family. Interacts with MAS1. Interacts with ARRB1. Interacts with FLNA (via filamin repeat 21); increases PKA-mediated phosphorylation of FLNA. Post-translationally, C-terminal Ser or Thr residues may be phosphorylated.

The protein localises to the cell membrane. In terms of biological role, receptor for angiotensin II, a vasoconstricting peptide, which acts as a key regulator of blood pressure and sodium retention by the kidney. The activated receptor in turn couples to G-alpha proteins G(q) (GNAQ, GNA11, GNA14 or GNA15) and thus activates phospholipase C and increases the cytosolic Ca(2+) concentrations, which in turn triggers cellular responses such as stimulation of protein kinase C. The sequence is that of Type-1 angiotensin II receptor A (Agtr1a) from Mus musculus (Mouse).